Here is a 578-residue protein sequence, read N- to C-terminus: Proline--tRNA ligase (578 aa).

It belongs to the class-II aminoacyl-tRNA synthetase family. ProS type 1 subfamily. Homodimer.

The protein localises to the cytoplasm. The enzyme catalyses tRNA(Pro) + L-proline + ATP = L-prolyl-tRNA(Pro) + AMP + diphosphate. Its function is as follows. Catalyzes the attachment of proline to tRNA(Pro) in a two-step reaction: proline is first activated by ATP to form Pro-AMP and then transferred to the acceptor end of tRNA(Pro). As ProRS can inadvertently accommodate and process non-cognate amino acids such as alanine and cysteine, to avoid such errors it has two additional distinct editing activities against alanine. One activity is designated as 'pretransfer' editing and involves the tRNA(Pro)-independent hydrolysis of activated Ala-AMP. The other activity is designated 'posttransfer' editing and involves deacylation of mischarged Ala-tRNA(Pro). The misacylated Cys-tRNA(Pro) is not edited by ProRS. This Burkholderia cenocepacia (strain HI2424) protein is Proline--tRNA ligase.